Reading from the N-terminus, the 347-residue chain is NADH-ubiquinone oxidoreductase chain 2 (347 aa).

11 helical membrane passes run 2 to 22, 25 to 45, 56 to 76, 96 to 116, 122 to 142, 149 to 169, 178 to 197, 202 to 219, 241 to 261, 278 to 298, and 323 to 343; these read SPYVLTIMSLSLLLGTTMTLI, HWLTAWMGLEINTLAVIPLMT, AIKYFMIQATASMIILFSAIF, FMMTIALAMKLGLAPFHFWVP, IPLLSGMILLTWQKIAPISIF, LNMSLLMILSITSTLLGGWGG, ILAYSSIAHMGWMTIIIMIY, ILNLILYLASTITMFMVL, MIIITLTLLSLGGLPPLTGFM, LAMMLALSTLLNLFFYMRIIY, and ILPIPTLTIISSLLLPMTPMF.

Belongs to the complex I subunit 2 family. Core subunit of respiratory chain NADH dehydrogenase (Complex I) which is composed of 45 different subunits. Interacts with TMEM242.

It localises to the mitochondrion inner membrane. It carries out the reaction a ubiquinone + NADH + 5 H(+)(in) = a ubiquinol + NAD(+) + 4 H(+)(out). Its function is as follows. Core subunit of the mitochondrial membrane respiratory chain NADH dehydrogenase (Complex I) which catalyzes electron transfer from NADH through the respiratory chain, using ubiquinone as an electron acceptor. Essential for the catalytic activity and assembly of complex I. The polypeptide is NADH-ubiquinone oxidoreductase chain 2 (Metachirus nudicaudatus (Brown four-eyed opossum)).